Here is an 87-residue protein sequence, read N- to C-terminus: Small ribosomal subunit protein bS20 (87 aa).

Belongs to the bacterial ribosomal protein bS20 family.

In terms of biological role, binds directly to 16S ribosomal RNA. This is Small ribosomal subunit protein bS20 from Corynebacterium urealyticum (strain ATCC 43042 / DSM 7109).